We begin with the raw amino-acid sequence, 763 residues long: Glycerophosphodiester phosphodiesterase GDPDL1 (763 aa).

The N-terminal stretch at 1–35 (MNSRPSNPTKLVIRSSTLLFCGVVLIHLFAAQIDA) is a signal peptide. The Extracellular portion of the chain corresponds to 36–744 (QRSTSRWQTL…STIAQAPSGQ (709 aa)). Positions 50–350 (PLVIARGGFS…DFPITASAAV (301 aa)) constitute a GP-PDE 1 domain. Residues N105, N192, N248, N257, N315, N359, N430, N534, N547, and N654 are each glycosylated (N-linked (GlcNAc...) asparagine). One can recognise a GP-PDE 2 domain in the interval 366–668 (FLVISKDGAS…EFPFTAARYK (303 aa)). A helical transmembrane segment spans residues 745–762 (TRLKLSLLLSVFFLSLLL). Residue L763 is a topological domain, cytoplasmic.

Belongs to the glycerophosphoryl diester phosphodiesterase family. Ca(2+) serves as cofactor. In terms of tissue distribution, expressed in rosette and cauline leaves, stems, flowers and siliques.

The protein resides in the cell membrane. It carries out the reaction a sn-glycero-3-phosphodiester + H2O = an alcohol + sn-glycerol 3-phosphate + H(+). In terms of biological role, hydrolyzes glycerolphosphoglycerol, glycerophosphocholine and glycerophosphoethanolamine in vitro. The polypeptide is Glycerophosphodiester phosphodiesterase GDPDL1 (Arabidopsis thaliana (Mouse-ear cress)).